A 632-amino-acid chain; its full sequence is Extracellular metalloproteinase 2 (632 aa).

An N-terminal signal peptide occupies residues 1 to 19 (MHGLLLAGLAVALPLGVAG). Positions 20–244 (HPARPQTALS…VHNVVDYVAS (225 aa)) are excised as a propeptide. N-linked (GlcNAc...) asparagine glycosylation is present at Asn-270. Residues 294 to 310 (NNVAAQDNPSGGSQWEN) are compositionally biased toward polar residues. The disordered stretch occupies residues 294 to 313 (NNVAAQDNPSGGSQWENNYR). His-429 serves as a coordination point for Zn(2+). The active site involves Glu-430. Residue His-433 participates in Zn(2+) binding.

This sequence belongs to the peptidase M36 family. It depends on Zn(2+) as a cofactor.

The protein localises to the secreted. In terms of biological role, secreted metalloproteinase probably acting as a virulence factor. The protein is Extracellular metalloproteinase 2 (MEP2) of Arthroderma otae (Microsporum canis).